The chain runs to 730 residues: Catalase-peroxidase (730 aa).

A disordered region spans residues Met-1 to Thr-21. A cross-link (tryptophyl-tyrosyl-methioninium (Trp-Tyr) (with M-244)) is located at residues Trp-95 to Tyr-218. His-96 (proton acceptor) is an active-site residue. Positions Tyr-218 to Met-244 form a cross-link, tryptophyl-tyrosyl-methioninium (Tyr-Met) (with W-95). His-259 contributes to the heme b binding site.

The protein belongs to the peroxidase family. Peroxidase/catalase subfamily. As to quaternary structure, homodimer or homotetramer. It depends on heme b as a cofactor. Formation of the three residue Trp-Tyr-Met cross-link is important for the catalase, but not the peroxidase activity of the enzyme.

The catalysed reaction is H2O2 + AH2 = A + 2 H2O. It catalyses the reaction 2 H2O2 = O2 + 2 H2O. Functionally, bifunctional enzyme with both catalase and broad-spectrum peroxidase activity. This Clostridium botulinum (strain Alaska E43 / Type E3) protein is Catalase-peroxidase.